The primary structure comprises 298 residues: Syntenin-1 (298 aa).

Ser-2 is modified (N-acetylserine). The interval 2–60 (SLYPSLEDLKVDKVIQAQTAFSANPANPAILSEASAPIPHDGNLYPRLYPELSQYMGLS) is interaction with PDCD6IP. 3 short sequence motifs (LYPX(n)L motif) span residues 3–7 (LYPSL), 45–49 (LYPRL), and 49–53 (LYPEL). A Phosphoserine modification is found at Ser-6. Phosphotyrosine is present on Tyr-46. PDZ domains lie at 114–193 (EVIL…IRDR) and 198–273 (TITM…MPAF). A 1,2-diacyl-sn-glycero-3-phospho-(1D-myo-inositol-4,5-bisphosphate)-binding positions include Asn-215 and 250–251 (KD).

Monomer and homodimer. Interacts with SDC1, SDC2, SDC3, SDC4, NRXN2, EPHA7, EPHB1, NF2 isoform 1, TGFA and IL5RA. Interacts with NFASC and PTPRJ. Interacts with SDCBP2. Interacts with PDCD6IP. Forms a complex with PDCD6IP and SDC2. Interacts (via C-terminus) with TGFBR1. Binds to FZD7; this interaction is increased by inositol trisphosphate (IP3). Interacts with SMO. Post-translationally, phosphorylated on tyrosine residues. Expressed in lung cancers, including adenocarcinoma, squamous cell carcinoma and small-cell carcinoma (at protein level). Widely expressed. Expressed in fetal kidney, liver, lung and brain. In adult highest expression in heart and placenta.

Its subcellular location is the cell junction. It is found in the focal adhesion. The protein localises to the adherens junction. The protein resides in the cell membrane. It localises to the endoplasmic reticulum membrane. Its subcellular location is the nucleus. It is found in the melanosome. The protein localises to the cytoplasm. The protein resides in the cytosol. It localises to the cytoskeleton. Its subcellular location is the secreted. It is found in the extracellular exosome. The protein localises to the membrane raft. Its function is as follows. Multifunctional adapter protein involved in diverse array of functions including trafficking of transmembrane proteins, neuro and immunomodulation, exosome biogenesis, and tumorigenesis. Positively regulates TGFB1-mediated SMAD2/3 activation and TGFB1-induced epithelial-to-mesenchymal transition (EMT) and cell migration in various cell types. May increase TGFB1 signaling by enhancing cell-surface expression of TGFR1 by preventing the interaction between TGFR1 and CAV1 and subsequent CAV1-dependent internalization and degradation of TGFR1. In concert with SDC1/4 and PDCD6IP, regulates exosome biogenesis. Regulates migration, growth, proliferation, and cell cycle progression in a variety of cancer types. In adherens junctions may function to couple syndecans to cytoskeletal proteins or signaling components. Seems to couple transcription factor SOX4 to the IL-5 receptor (IL5RA). May also play a role in vesicular trafficking. Seems to be required for the targeting of TGFA to the cell surface in the early secretory pathway. The polypeptide is Syntenin-1 (SDCBP) (Homo sapiens (Human)).